Here is a 336-residue protein sequence, read N- to C-terminus: Holliday junction branch migration complex subunit RuvB (336 aa).

Positions 4 to 184 (SDRLISSQSI…FGIVQRLEYY (181 aa)) are large ATPase domain (RuvB-L). ATP is bound by residues I23, R24, G65, K68, T69, T70, 131-133 (EDY), R174, Y184, and R221. T69 is a Mg(2+) binding site. The interval 185-255 (SVDSLTQIVA…MAQQALEMLE (71 aa)) is small ATPAse domain (RuvB-S). Positions 258–336 (QHGFDLMDRK…HFGFSAIEQE (79 aa)) are head domain (RuvB-H). DNA is bound by residues R313 and R318.

The protein belongs to the RuvB family. As to quaternary structure, homohexamer. Forms an RuvA(8)-RuvB(12)-Holliday junction (HJ) complex. HJ DNA is sandwiched between 2 RuvA tetramers; dsDNA enters through RuvA and exits via RuvB. An RuvB hexamer assembles on each DNA strand where it exits the tetramer. Each RuvB hexamer is contacted by two RuvA subunits (via domain III) on 2 adjacent RuvB subunits; this complex drives branch migration. In the full resolvosome a probable DNA-RuvA(4)-RuvB(12)-RuvC(2) complex forms which resolves the HJ.

The protein resides in the cytoplasm. The catalysed reaction is ATP + H2O = ADP + phosphate + H(+). The RuvA-RuvB-RuvC complex processes Holliday junction (HJ) DNA during genetic recombination and DNA repair, while the RuvA-RuvB complex plays an important role in the rescue of blocked DNA replication forks via replication fork reversal (RFR). RuvA specifically binds to HJ cruciform DNA, conferring on it an open structure. The RuvB hexamer acts as an ATP-dependent pump, pulling dsDNA into and through the RuvAB complex. RuvB forms 2 homohexamers on either side of HJ DNA bound by 1 or 2 RuvA tetramers; 4 subunits per hexamer contact DNA at a time. Coordinated motions by a converter formed by DNA-disengaged RuvB subunits stimulates ATP hydrolysis and nucleotide exchange. Immobilization of the converter enables RuvB to convert the ATP-contained energy into a lever motion, pulling 2 nucleotides of DNA out of the RuvA tetramer per ATP hydrolyzed, thus driving DNA branch migration. The RuvB motors rotate together with the DNA substrate, which together with the progressing nucleotide cycle form the mechanistic basis for DNA recombination by continuous HJ branch migration. Branch migration allows RuvC to scan DNA until it finds its consensus sequence, where it cleaves and resolves cruciform DNA. This is Holliday junction branch migration complex subunit RuvB from Legionella pneumophila subsp. pneumophila (strain Philadelphia 1 / ATCC 33152 / DSM 7513).